The primary structure comprises 264 residues: Major prion protein (264 aa).

The signal sequence occupies residues 1–24 (MVKSHIGSWILVLFVAMWSDVGLC). The interval 25 to 241 (KKRPKPGGGW…ESEAYYQRGA (217 aa)) is interaction with GRB2, ERI3 and SYN1. A disordered region spans residues 28 to 118 (PKPGGGWNTG…QWNKPSKPKT (91 aa)). 6 repeat units span residues 54 to 62 (SQGGGGWGQ), 63 to 70 (PHGGGWGQ), 71 to 78 (PHGGGWGQ), 79 to 86 (PHGGGWGQ), 87 to 94 (PHGGGWGQ), and 95 to 103 (PHGGGGWGQ). A 6 X 8 AA tandem repeats of P-H-G-G-G-W-G-Q region spans residues 54–103 (SQGGGGWGQPHGGGWGQPHGGGWGQPHGGGWGQPHGGGWGQPHGGGGWGQ). The span at 55 to 107 (QGGGGWGQPHGGGWGQPHGGGWGQPHGGGWGQPHGGGWGQPHGGGGWGQGGTH) shows a compositional bias: gly residues. Positions 72, 73, 74, 80, 81, 82, 88, 89, 90, 96, 98, and 99 each coordinate Cu(2+). An intrachain disulfide couples cysteine 190 to cysteine 225. N-linked (GlcNAc...) asparagine glycosylation is found at asparagine 192 and asparagine 208. Alanine 241 carries the GPI-anchor amidated alanine lipid modification. The propeptide at 242-264 (SVILFSSPPVILLISFLIFLIVG) is removed in mature form.

This sequence belongs to the prion family. Monomer and homodimer. Has a tendency to aggregate into amyloid fibrils containing a cross-beta spine, formed by a steric zipper of superposed beta-strands. Soluble oligomers may represent an intermediate stage on the path to fibril formation. Copper binding may promote oligomerization. Interacts with GRB2, APP, ERI3/PRNPIP and SYN1. Mislocalized cytosolically exposed PrP interacts with MGRN1; this interaction alters MGRN1 subcellular location and causes lysosomal enlargement. Interacts with KIAA1191.

The protein localises to the cell membrane. It localises to the golgi apparatus. Functionally, its primary physiological function is unclear. Has cytoprotective activity against internal or environmental stresses. May play a role in neuronal development and synaptic plasticity. May be required for neuronal myelin sheath maintenance. May play a role in iron uptake and iron homeostasis. Soluble oligomers are toxic to cultured neuroblastoma cells and induce apoptosis (in vitro). Association with GPC1 (via its heparan sulfate chains) targets PRNP to lipid rafts. Also provides Cu(2+) or Zn(2+) for the ascorbate-mediated GPC1 deaminase degradation of its heparan sulfate side chains. This chain is Major prion protein (PRNP), found in Tragelaphus imberbis (Lesser kudu).